Reading from the N-terminus, the 148-residue chain is Large-conductance mechanosensitive channel (148 aa).

Helical transmembrane passes span 9 to 29 (AFAVKGNVVDMAVGIIIGAAF) and 79 to 99 (IQTVIDFIIVAFAIFMGVKAI).

It belongs to the MscL family. In terms of assembly, homopentamer.

The protein localises to the cell inner membrane. Channel that opens in response to stretch forces in the membrane lipid bilayer. May participate in the regulation of osmotic pressure changes within the cell. The polypeptide is Large-conductance mechanosensitive channel (Pseudomonas syringae pv. tomato (strain ATCC BAA-871 / DC3000)).